The primary structure comprises 118 residues: Cell division protein FtsB (118 aa).

Topologically, residues 1–6 (MRNWRW) are cytoplasmic. Residues 7-24 (LLLVLAALLAWLQHRFWF) form a helical membrane-spanning segment. Over 25–118 (GPGNSGEVRM…DLSQPRREKR (94 aa)) the chain is Periplasmic. Residues 30–66 (GEVRMLQVQIVQQHQENERLRQRNASLAAEVKNLKDG) adopt a coiled-coil conformation. The tract at residues 98–118 (LPNDTSADHGVDLSQPRREKR) is disordered. The segment covering 103–118 (SADHGVDLSQPRREKR) has biased composition (basic and acidic residues).

This sequence belongs to the FtsB family. Part of a complex composed of FtsB, FtsL and FtsQ.

The protein resides in the cell inner membrane. Its function is as follows. Essential cell division protein. May link together the upstream cell division proteins, which are predominantly cytoplasmic, with the downstream cell division proteins, which are predominantly periplasmic. This chain is Cell division protein FtsB, found in Xylella fastidiosa (strain M23).